The chain runs to 78 residues: MNRTKLVLGAVILGSTLLAGCSSNAKIDQLSSDVQTLNAKVDQLSNDVNAIRSDVQAAKDDAARANQRLDNQVRTYKK.

Positions 1-20 are cleaved as a signal peptide; sequence MNRTKLVLGAVILGSTLLAG. The N-palmitoyl cysteine moiety is linked to residue Cys-21. A lipid anchor (S-diacylglycerol cysteine) is attached at Cys-21. 2 repeats span residues 24-34 and 38-48; these read NAKIDQLSSDV and NAKVDQLSNDV. Residues 27 to 75 are a coiled coil; the sequence is IDQLSSDVQTLNAKVDQLSNDVNAIRSDVQAAKDDAARANQRLDNQVRT. Lys-78 bears the N6-murein peptidoglycan lysine mark.

It belongs to the Lpp family. As to quaternary structure, homotrimer.

The protein resides in the cell outer membrane. It is found in the secreted. It localises to the cell wall. In terms of biological role, a highly abundant outer membrane lipoprotein that controls the distance between the inner and outer membranes. The only protein known to be covalently linked to the peptidoglycan network (PGN). Also non-covalently binds the PGN. The link between the cell outer membrane and PGN contributes to maintenance of the structural and functional integrity of the cell envelope, and maintains the correct distance between the PGN and the outer membrane. This Pectobacterium atrosepticum (strain SCRI 1043 / ATCC BAA-672) (Erwinia carotovora subsp. atroseptica) protein is Major outer membrane lipoprotein Lpp.